We begin with the raw amino-acid sequence, 367 residues long: Isocitrate dehydrogenase [NAD] regulatory subunit 1, mitochondrial (367 aa).

The N-terminal 25 residues, 1-25, are a transit peptide targeting the mitochondrion; the sequence is MSRRSLTLLKNLARNANGSGIQTRS.

This sequence belongs to the isocitrate and isopropylmalate dehydrogenases family. Heterooligomer of catalytic and regulatory subunits. As to expression, ubiquitous. Predominantly expressed in roots, stems and leaves.

The protein localises to the mitochondrion. Performs an essential role in the oxidative function of the citric acid cycle. The chain is Isocitrate dehydrogenase [NAD] regulatory subunit 1, mitochondrial (IDH1) from Arabidopsis thaliana (Mouse-ear cress).